A 249-amino-acid chain; its full sequence is U1 small nuclear ribonucleoprotein usp102 (249 aa).

The interval M1–S25 is disordered. The RRM 1 domain occupies E26–S105. A disordered region spans residues R113–V157. A compositionally biased stretch (basic and acidic residues) spans E114–K134. The region spanning K174–K247 is the RRM 2 domain.

This sequence belongs to the RRM U1 A/B'' family. Component of the spliceosome where it is associated with snRNP U1.

It is found in the nucleus. It localises to the nucleolus. In terms of biological role, involved in nuclear mRNA splicing. In Schizosaccharomyces pombe (strain 972 / ATCC 24843) (Fission yeast), this protein is U1 small nuclear ribonucleoprotein usp102.